Reading from the N-terminus, the 468-residue chain is MSQGKIVQIIGAVVDVEFQRNEVPKVYHALKVEGTAITLEVQQQLGDGVVRTIALGSTDGLKRNLLATNTERAISVPVGAGTLGRIMDVLGRPIDEAGDVQASDHWEIHRAAPSYEDQSSSTELLETGIKVIDLMCPFAKGGKVGLFGGAGVGKTVNMMELINNIAKAHSGLSVFAGVGERTREGNDFYHEMKDSNVLDKVAMVYGQMNEPPGNRLRVALTGLTMAEYFRDEKDASGKGKDVLLFVDNIYRYTLAGTEVSALLGRMPSAVGYQPTLAEEMGVLQERITSTKSGSITSIQAVYVPADDLTDPSPATTFAHLDSTVTLSRNIASLGIYPAVDPLDSTSRQMDPLVIGHEHYDTAQRVQQTLQKYKELKDIIAILGMDELSEEDKQSVSRARKIERFFSQPFHVAEVFTGSPGKYVSLKDTIRGFKAICDGEYDHLPEQAFYMVGSIEEAVEKANKMSAKA.

148–155 provides a ligand contact to ATP; the sequence is GGAGVGKT.

The protein belongs to the ATPase alpha/beta chains family. F-type ATPases have 2 components, CF(1) - the catalytic core - and CF(0) - the membrane proton channel. CF(1) has five subunits: alpha(3), beta(3), gamma(1), delta(1), epsilon(1). CF(0) has three main subunits: a(1), b(2) and c(9-12). The alpha and beta chains form an alternating ring which encloses part of the gamma chain. CF(1) is attached to CF(0) by a central stalk formed by the gamma and epsilon chains, while a peripheral stalk is formed by the delta and b chains.

The protein localises to the cell inner membrane. It carries out the reaction ATP + H2O + 4 H(+)(in) = ADP + phosphate + 5 H(+)(out). Produces ATP from ADP in the presence of a proton gradient across the membrane. The catalytic sites are hosted primarily by the beta subunits. This is ATP synthase subunit beta from Xanthomonas campestris pv. campestris (strain B100).